A 260-amino-acid polypeptide reads, in one-letter code: Shikimate dehydrogenase (NADP(+)) (260 aa).

Shikimate-binding positions include 14–16 and Thr-60; that span reads SAS. Lys-64 serves as the catalytic Proton acceptor. 2 residues coordinate shikimate: Asn-85 and Asp-100. Residues 121-125, 145-150, and Phe-201 each bind NADP(+); these read GAGGA and NRTYER. Residue Tyr-203 coordinates shikimate. Position 225 (Gly-225) interacts with NADP(+).

It belongs to the shikimate dehydrogenase family. Homodimer.

It catalyses the reaction shikimate + NADP(+) = 3-dehydroshikimate + NADPH + H(+). The protein operates within metabolic intermediate biosynthesis; chorismate biosynthesis; chorismate from D-erythrose 4-phosphate and phosphoenolpyruvate: step 4/7. Its function is as follows. Involved in the biosynthesis of the chorismate, which leads to the biosynthesis of aromatic amino acids. Catalyzes the reversible NADPH linked reduction of 3-dehydroshikimate (DHSA) to yield shikimate (SA). This chain is Shikimate dehydrogenase (NADP(+)), found in Pyrobaculum neutrophilum (strain DSM 2338 / JCM 9278 / NBRC 100436 / V24Sta) (Thermoproteus neutrophilus).